The following is a 212-amino-acid chain: Lipopolysaccharide core heptose(II)-phosphate phosphatase (212 aa).

The signal sequence occupies residues 1–32; sequence MSIGGVYELAFCRSSLKSKKYFIILLALAAIA.

This sequence belongs to the phosphoglycerate mutase family. Ais subfamily.

The protein localises to the periplasm. Its pathway is bacterial outer membrane biogenesis; lipopolysaccharide metabolism. Functionally, catalyzes the dephosphorylation of heptose(II) of the outer membrane lipopolysaccharide core. The protein is Lipopolysaccharide core heptose(II)-phosphate phosphatase of Shigella boydii serotype 4 (strain Sb227).